We begin with the raw amino-acid sequence, 181 residues long: MGDPKKSRKKWETPGHPWIKERIGYEQELLGKYGLRNKREIWIAQSIIRKFRHQARSLLALPPAERAVREKQLVGKLLKMGLLKKETATVDDILSLTEQDLLERRLQTIVYKKGLSNTIYQARQLITHGHIAVNGKRVTSPGYIVNVDEENLIDYYVTSSFKSRPPVMSQQEGGEIGVKQA.

Positions 104-172 (RRLQTIVYKK…SRPPVMSQQE (69 aa)) constitute an S4 RNA-binding domain.

The protein belongs to the universal ribosomal protein uS4 family. As to quaternary structure, part of the 30S ribosomal subunit. Contacts protein S5. The interaction surface between S4 and S5 is involved in control of translational fidelity.

One of the primary rRNA binding proteins, it binds directly to 16S rRNA where it nucleates assembly of the body of the 30S subunit. In terms of biological role, with S5 and S12 plays an important role in translational accuracy. The sequence is that of Small ribosomal subunit protein uS4 from Saccharolobus solfataricus (strain ATCC 35092 / DSM 1617 / JCM 11322 / P2) (Sulfolobus solfataricus).